The primary structure comprises 110 residues: Nucleoid-associated protein Mvan_5528 (110 aa).

This sequence belongs to the YbaB/EbfC family. In terms of assembly, homodimer.

It localises to the cytoplasm. The protein localises to the nucleoid. Binds to DNA and alters its conformation. May be involved in regulation of gene expression, nucleoid organization and DNA protection. The polypeptide is Nucleoid-associated protein Mvan_5528 (Mycolicibacterium vanbaalenii (strain DSM 7251 / JCM 13017 / BCRC 16820 / KCTC 9966 / NRRL B-24157 / PYR-1) (Mycobacterium vanbaalenii)).